We begin with the raw amino-acid sequence, 251 residues long: NAD kinase (251 aa).

Catalysis depends on Asp51, which acts as the Proton acceptor. Residues 51-52 (DG), Lys56, 113-114 (NE), Lys124, His140, Asp142, 153-158 (TGYSLS), and Ala177 each bind NAD(+).

This sequence belongs to the NAD kinase family. It depends on a divalent metal cation as a cofactor.

The protein localises to the cytoplasm. It catalyses the reaction NAD(+) + ATP = ADP + NADP(+) + H(+). Functionally, involved in the regulation of the intracellular balance of NAD and NADP, and is a key enzyme in the biosynthesis of NADP. Catalyzes specifically the phosphorylation on 2'-hydroxyl of the adenosine moiety of NAD to yield NADP. This is NAD kinase from Thermosipho melanesiensis (strain DSM 12029 / CIP 104789 / BI429).